The following is a 577-amino-acid chain: Protein NRT1/ PTR FAMILY 6.2 (577 aa).

Transmembrane regions (helical) follow at residues 28 to 48, 74 to 94, 96 to 116, 134 to 154, 183 to 203, 214 to 234, 332 to 352, 369 to 389, 409 to 429, 447 to 467, 488 to 508, and 535 to 555; these read WITAALILGIEVVERLSTMGI, FMGTSFLLCLLGGFLADSFLG, FKTIGIFSTIQALGTGALAVA, IPATAFQMTILYVSLYLIALG, FFFNRFFFFISMGTLLAVTVL, WAYGICTVSMAIAIVIFLCGT, LLPIWATTIIFWTTYAQMITF, IPAGSLTVFFVAAILITLAVY, LQRIAIGLVLSTAGMAAAALV, ISVFLLVPQFFLVGAGEAFIY, GLFLTTLSLGFFVSSFLVSIV, and WLLVILSGINFVVYIICALWF.

This sequence belongs to the major facilitator superfamily. Proton-dependent oligopeptide transporter (POT/PTR) (TC 2.A.17) family. In terms of tissue distribution, expressed in shoots, leaves, flowers and siliques. Expressed in leaf petiole.

The protein resides in the membrane. Functionally, low-affinity proton-dependent nitrate transporter. Not involved in dipeptides transport. The chain is Protein NRT1/ PTR FAMILY 6.2 (NPF6.2) from Arabidopsis thaliana (Mouse-ear cress).